Consider the following 721-residue polypeptide: Mitogen-activated protein kinase 6 (721 aa).

In terms of domain architecture, Protein kinase spans 20–316 (YMDLKPLGCG…AEEALSHPYM (297 aa)). ATP-binding positions include 26 to 34 (LGCGGNGLV) and K49. Residue D152 is the Proton acceptor of the active site. T626 bears the Phosphothreonine mark. A TXY motif is present at residues 626-628 (TSY). Y628 carries the phosphotyrosine modification.

The protein belongs to the protein kinase superfamily. CMGC Ser/Thr protein kinase family. MAP kinase subfamily. Mg(2+) is required as a cofactor. Dually phosphorylated on Thr-626 and Tyr-628, which activates the enzyme.

The catalysed reaction is L-seryl-[protein] + ATP = O-phospho-L-seryl-[protein] + ADP + H(+). It catalyses the reaction L-threonyl-[protein] + ATP = O-phospho-L-threonyl-[protein] + ADP + H(+). With respect to regulation, activated by threonine and tyrosine phosphorylation. Phosphorylates microtubule-associated protein 2 (MAP2). May promote entry in the cell cycle. In Gallus gallus (Chicken), this protein is Mitogen-activated protein kinase 6 (MAPK6).